Reading from the N-terminus, the 259-residue chain is MPVVSMKQLLEAGVHFGHQTRRWNPKMKPFIFTERNGIYIIDLQKTVKMIDTAYNYVKDVAADGGVVLFVGTKKQAQDSIEEEATRAGQYYVNHRWLGGTLTNWKTIQSRISRLKELKKMAEDGTFDRLPKKEVAVLTKQREKLERFLGGIEDMPRIPDVLYIVDPHKEQIAVKEAQKLHIPIVAMVDTNTDPDDIDVIIPSNDDAIRAVRLITAKMADAVIEGKQGEDDQQVAPAEDVAEEVSDESLQDLKNSVEGND.

Positions 224-259 (GKQGEDDQQVAPAEDVAEEVSDESLQDLKNSVEGND) are disordered. The segment covering 238–248 (DVAEEVSDESL) has biased composition (acidic residues). Residues 250 to 259 (DLKNSVEGND) are compositionally biased toward polar residues.

The protein belongs to the universal ribosomal protein uS2 family.

This is Small ribosomal subunit protein uS2 from Limosilactobacillus fermentum (strain NBRC 3956 / LMG 18251) (Lactobacillus fermentum).